The following is a 198-amino-acid chain: Peptidyl-tRNA hydrolase (198 aa).

Tyr16 contributes to the tRNA binding site. His21 functions as the Proton acceptor in the catalytic mechanism. TRNA-binding residues include Phe67, Asn69, and Asn115.

The protein belongs to the PTH family. Monomer.

Its subcellular location is the cytoplasm. It catalyses the reaction an N-acyl-L-alpha-aminoacyl-tRNA + H2O = an N-acyl-L-amino acid + a tRNA + H(+). Its function is as follows. Hydrolyzes ribosome-free peptidyl-tRNAs (with 1 or more amino acids incorporated), which drop off the ribosome during protein synthesis, or as a result of ribosome stalling. Functionally, catalyzes the release of premature peptidyl moieties from peptidyl-tRNA molecules trapped in stalled 50S ribosomal subunits, and thus maintains levels of free tRNAs and 50S ribosomes. This Prochlorococcus marinus (strain MIT 9301) protein is Peptidyl-tRNA hydrolase.